The chain runs to 112 residues: T cell receptor alpha variable 2 (112 aa).

The signal sequence occupies residues 1-25 (MALQSTLGAVWLGLLLNSLWKVAES). The Ig-like domain occupies 26–112 (KDQVFQPSTV…DAAVYYCAVE (87 aa)). C47 and C109 are disulfide-bonded. Residues N48 and N84 are each glycosylated (N-linked (GlcNAc...) asparagine).

As to quaternary structure, alpha-beta TR is a heterodimer composed of an alpha and beta chain; disulfide-linked. The alpha-beta TR is associated with the transmembrane signaling CD3 coreceptor proteins to form the TR-CD3 (TcR or TCR). The assembly of alpha-beta TR heterodimers with CD3 occurs in the endoplasmic reticulum where a single alpha-beta TR heterodimer associates with one CD3D-CD3E heterodimer, one CD3G-CD3E heterodimer and one CD247 homodimer forming a stable octameric structure. CD3D-CD3E and CD3G-CD3E heterodimers preferentially associate with TR alpha and TR beta chains, respectively. The association of the CD247 homodimer is the last step of TcR assembly in the endoplasmic reticulum and is required for transport to the cell surface.

The protein resides in the cell membrane. Functionally, v region of the variable domain of T cell receptor (TR) alpha chain that participates in the antigen recognition. Alpha-beta T cell receptors are antigen specific receptors which are essential to the immune response and are present on the cell surface of T lymphocytes. Recognize peptide-major histocompatibility (MH) (pMH) complexes that are displayed by antigen presenting cells (APC), a prerequisite for efficient T cell adaptive immunity against pathogens. Binding of alpha-beta TR to pMH complex initiates TR-CD3 clustering on the cell surface and intracellular activation of LCK that phosphorylates the ITAM motifs of CD3G, CD3D, CD3E and CD247 enabling the recruitment of ZAP70. In turn ZAP70 phosphorylates LAT, which recruits numerous signaling molecules to form the LAT signalosome. The LAT signalosome propagates signal branching to three major signaling pathways, the calcium, the mitogen-activated protein kinase (MAPK) kinase and the nuclear factor NF-kappa-B (NF-kB) pathways, leading to the mobilization of transcription factors that are critical for gene expression and essential for T cell growth and differentiation. The T cell repertoire is generated in the thymus, by V-(D)-J rearrangement. This repertoire is then shaped by intrathymic selection events to generate a peripheral T cell pool of self-MH restricted, non-autoaggressive T cells. Post-thymic interaction of alpha-beta TR with the pMH complexes shapes TR structural and functional avidity. The sequence is that of T cell receptor alpha variable 2 from Homo sapiens (Human).